Here is a 127-residue protein sequence, read N- to C-terminus: Small ribosomal subunit protein uS12 (127 aa).

Asp89 is modified (3-methylthioaspartic acid).

The protein belongs to the universal ribosomal protein uS12 family. In terms of assembly, part of the 30S ribosomal subunit. Contacts proteins S8 and S17. May interact with IF1 in the 30S initiation complex.

With S4 and S5 plays an important role in translational accuracy. Functionally, interacts with and stabilizes bases of the 16S rRNA that are involved in tRNA selection in the A site and with the mRNA backbone. Located at the interface of the 30S and 50S subunits, it traverses the body of the 30S subunit contacting proteins on the other side and probably holding the rRNA structure together. The combined cluster of proteins S8, S12 and S17 appears to hold together the shoulder and platform of the 30S subunit. In Nautilia profundicola (strain ATCC BAA-1463 / DSM 18972 / AmH), this protein is Small ribosomal subunit protein uS12.